The sequence spans 369 residues: Biglycan (369 aa).

Residues 1–16 (MWPLWPLAALLALSQA) form the signal peptide. Positions 17 to 37 (LPFEQKAFWDFTLDDGLPMLN) are excised as a propeptide. O-linked (Xyl...) (glycosaminoglycan) serine glycans are attached at residues S42 and S48. 2 disulfide bridges follow: C64–C70 and C68–C77. LRR repeat units follow at residues 83-103 (KAVP…NNDI), 104-127 (SELR…NNKI), 128-151 (SKIH…KNHL), 152-172 (VEIP…DNRI), 173-196 (RKVP…GNPL), 197-221 (ENSG…EAKL), 222-242 (TGIP…HNKI), 243-266 (QAIE…HNQI), 267-290 (RMIE…NNKL), 291-313 (SRVP…TNNI), 314-343 (TKVG…NNPV), and 344-369 (PYWE…NYKK). O-linked (Xyl...) (glycosaminoglycan) serine glycans are attached at residues S181 and S199. Residues N271 and N312 are each glycosylated (N-linked (GlcNAc...) asparagine). Residues C322 and C355 are joined by a disulfide bond.

The protein belongs to the small leucine-rich proteoglycan (SLRP) family. SLRP class I subfamily. As to quaternary structure, homodimer. Forms a ternary complex with MFAP2 and ELN. Post-translationally, the two attached glycosaminoglycan chains can be either chondroitin sulfate or dermatan sulfate. As to expression, found in several connective tissues, especially in articular cartilages.

It localises to the secreted. It is found in the extracellular space. Its subcellular location is the extracellular matrix. May be involved in collagen fiber assembly. This chain is Biglycan (BGN), found in Bos taurus (Bovine).